A 231-amino-acid polypeptide reads, in one-letter code: tRNA (guanine-N(1)-)-methyltransferase (231 aa).

S-adenosyl-L-methionine contacts are provided by residues Gly-112 and 132-137 (LGDFVL).

It belongs to the RNA methyltransferase TrmD family. Homodimer.

The protein localises to the cytoplasm. It catalyses the reaction guanosine(37) in tRNA + S-adenosyl-L-methionine = N(1)-methylguanosine(37) in tRNA + S-adenosyl-L-homocysteine + H(+). Its function is as follows. Specifically methylates guanosine-37 in various tRNAs. This chain is tRNA (guanine-N(1)-)-methyltransferase, found in Gloeothece citriformis (strain PCC 7424) (Cyanothece sp. (strain PCC 7424)).